We begin with the raw amino-acid sequence, 94 residues long: Co-chaperonin GroES (94 aa).

Belongs to the GroES chaperonin family. Heptamer of 7 subunits arranged in a ring. Interacts with the chaperonin GroEL.

The protein localises to the cytoplasm. Functionally, together with the chaperonin GroEL, plays an essential role in assisting protein folding. The GroEL-GroES system forms a nano-cage that allows encapsulation of the non-native substrate proteins and provides a physical environment optimized to promote and accelerate protein folding. GroES binds to the apical surface of the GroEL ring, thereby capping the opening of the GroEL channel. This is Co-chaperonin GroES from Staphylococcus carnosus (strain TM300).